Consider the following 267-residue polypeptide: Hydroxyethylthiazole kinase 2 (267 aa).

Residue methionine 41 participates in substrate binding. ATP contacts are provided by lysine 116 and threonine 166. Position 193 (glycine 193) interacts with substrate.

This sequence belongs to the Thz kinase family. It depends on Mg(2+) as a cofactor.

It catalyses the reaction 5-(2-hydroxyethyl)-4-methylthiazole + ATP = 4-methyl-5-(2-phosphooxyethyl)-thiazole + ADP + H(+). It functions in the pathway cofactor biosynthesis; thiamine diphosphate biosynthesis; 4-methyl-5-(2-phosphoethyl)-thiazole from 5-(2-hydroxyethyl)-4-methylthiazole: step 1/1. Its function is as follows. Catalyzes the phosphorylation of the hydroxyl group of 4-methyl-5-beta-hydroxyethylthiazole (THZ). This is Hydroxyethylthiazole kinase 2 from Streptococcus pneumoniae serotype 4 (strain ATCC BAA-334 / TIGR4).